A 147-amino-acid polypeptide reads, in one-letter code: Hemoglobin subunit beta (147 aa).

V2 is modified (N-acetylvaline). One can recognise a Globin domain in the interval 3-147 (HLSAEEKGLV…VATALAHKYH (145 aa)). Phosphothreonine is present on T13. Residue S45 is modified to Phosphoserine. Position 60 is an N6-acetyllysine (K60). H64 lines the heme b pocket. At K83 the chain carries N6-acetyllysine. H93 lines the heme b pocket. C94 carries the S-nitrosocysteine modification. K145 is subject to N6-acetyllysine.

Belongs to the globin family. Heterotetramer of two alpha chains and two beta chains. As to expression, red blood cells.

Involved in oxygen transport from the lung to the various peripheral tissues. The protein is Hemoglobin subunit beta (HBB) of Scapanus orarius (Coast mole).